The sequence spans 727 residues: Glucans biosynthesis glucosyltransferase H (727 aa).

Residues 18-38 (SAMPNERPGAMEPQNLSKMPE) form a disordered region. The next 7 membrane-spanning stretches (helical) occupy residues 58–78 (FLVVGGALLLSLFAIYEMGAV), 97–117 (VNFCWIALAFCSGIAGFLILL), 278–298 (LQQFAARIYGPVIGTGLGWWV), 408–428 (IMAYLSSPFWLMLILTGLMLA), 460–480 (LFYITMGVLFGPKIFGVLLLL), 496–516 (IFSVIFEVILSALIAPIMMFI), and 572–592 (LLAWMSPALIGLWIAVPISAW).

The protein belongs to the glycosyltransferase 2 family. OpgH subfamily.

The protein localises to the cell inner membrane. It functions in the pathway glycan metabolism; osmoregulated periplasmic glucan (OPG) biosynthesis. Involved in the biosynthesis of osmoregulated periplasmic glucans (OPGs). The protein is Glucans biosynthesis glucosyltransferase H of Shewanella baltica (strain OS223).